The chain runs to 342 residues: S-adenosylmethionine:tRNA ribosyltransferase-isomerase (342 aa).

The protein belongs to the QueA family. As to quaternary structure, monomer.

The protein localises to the cytoplasm. It carries out the reaction 7-aminomethyl-7-carbaguanosine(34) in tRNA + S-adenosyl-L-methionine = epoxyqueuosine(34) in tRNA + adenine + L-methionine + 2 H(+). The protein operates within tRNA modification; tRNA-queuosine biosynthesis. Its function is as follows. Transfers and isomerizes the ribose moiety from AdoMet to the 7-aminomethyl group of 7-deazaguanine (preQ1-tRNA) to give epoxyqueuosine (oQ-tRNA). This chain is S-adenosylmethionine:tRNA ribosyltransferase-isomerase, found in Zymomonas mobilis subsp. mobilis (strain ATCC 31821 / ZM4 / CP4).